The primary structure comprises 55 residues: Large ribosomal subunit protein bL33 (55 aa).

Belongs to the bacterial ribosomal protein bL33 family.

This is Large ribosomal subunit protein bL33 from Phenylobacterium zucineum (strain HLK1).